The sequence spans 146 residues: Zinc metalloproteinase-disintegrin salmosin-3 (146 aa).

In terms of domain architecture, Peptidase M12B spans 1–57 (SCPCDANSCIMSATLSNEPSSRFSDCSFSLPSRFSDCSFNQYSSDIIHYHECLLNEP). Intrachain disulfides connect C2-C37, C4-C9, C68-C87, C79-C97, C81-C92, C91-C114, C105-C111, C110-C135, and C123-C142. In terms of domain architecture, Disintegrin spans 65-146 (PPVCGNYYPE…GQSGVCPRNT (82 aa)). The Cell attachment site motif lies at 127 to 129 (RGD).

Belongs to the venom metalloproteinase (M12B) family. P-II subfamily. P-IIb sub-subfamily. As to quaternary structure, monomer (disintegrin). It depends on Zn(2+) as a cofactor. In terms of tissue distribution, expressed by the venom gland.

The protein resides in the secreted. Functionally, snake venom zinc metalloproteinase that inhibits ADP-induced platelet aggregation (probably by binding integrin alpha-IIb/beta-3 (ITGA2B/ITGB3)) and degrades fibrinogen. This chain is Zinc metalloproteinase-disintegrin salmosin-3, found in Gloydius brevicauda (Korean slamosa snake).